We begin with the raw amino-acid sequence, 372 residues long: uncharacterized protein (372 aa).

An N-terminal signal peptide occupies residues 1–19; sequence MKIFFLFIILLGIIQLSNS. An N-linked (GlcNAc...) asparagine glycan is attached at asparagine 18. An MRH domain is found at 20 to 160; it reads SSCNIDIAGD…IWTTKYSCAI (141 aa). A disulfide bridge links cysteine 22 with cysteine 58. Asparagine 59 carries N-linked (GlcNAc...) asparagine glycosylation. An intrachain disulfide couples cysteine 128 to cysteine 158. Residues 185–282 are a coiled coil; it reads NEILNEAQSN…VQFNDDIKLI (98 aa). A disordered region spans residues 201–233; the sequence is KNEDLNNNNNNNNNNNNNNNNNNNNNNNNNKIN. The span at 206–230 shows a compositional bias: low complexity; sequence NNNNNNNNNNNNNNNNNNNNNNNNN.

The protein localises to the secreted. This is an uncharacterized protein from Dictyostelium discoideum (Social amoeba).